The primary structure comprises 932 residues: Protocadherin gamma-A6 (932 aa).

The signal sequence occupies residues 1–29; sequence MAPPQRHPQRSEQVLLLTLLGTLWGAAAA. Cadherin domains lie at 30 to 133, 134 to 242, 243 to 347, 348 to 452, 453 to 562, and 570 to 682; these read QIRY…TPRF, LKEE…TPMF, TQPV…VPEV, VVTS…PPTF, PHSS…APEI, and DGST…EPSA. The Extracellular segment spans residues 30–692; it reads QIRYSIPEEL…KPNDSDLTLY (663 aa). N-linked (GlcNAc...) asparagine glycosylation is present at Asn81. N-linked (GlcNAc...) asparagine glycans are attached at residues Asn419 and Asn545. Asn685 carries an N-linked (GlcNAc...) asparagine glycan. A helical transmembrane segment spans residues 693 to 713; the sequence is LVVAVAAVSCVFLAFVIVLLA. The Cytoplasmic segment spans residues 714 to 932; that stretch reads LRLQRWHKSR…KKKSGKKEKK (219 aa). Disordered stretches follow at residues 804 to 841 and 902 to 932; these read PRQLQQAPPNTDWRFSQAQRPGTSGSQNGDDTGTWPNN and ATLTNAAGKRDGKAPAGGNGNKKKSGKKEKK. The segment covering 806 to 841 has biased composition (polar residues); the sequence is QLQQAPPNTDWRFSQAQRPGTSGSQNGDDTGTWPNN. Residues 922-932 are compositionally biased toward basic residues; it reads NKKKSGKKEKK.

Its subcellular location is the cell membrane. Functionally, potential calcium-dependent cell-adhesion protein. May be involved in the establishment and maintenance of specific neuronal connections in the brain. This is Protocadherin gamma-A6 (PCDHGA6) from Homo sapiens (Human).